The following is a 305-amino-acid chain: Sulfate adenylyltransferase subunit 2 (305 aa).

Belongs to the PAPS reductase family. CysD subfamily. In terms of assembly, heterodimer composed of CysD, the smaller subunit, and CysN.

The enzyme catalyses sulfate + ATP + H(+) = adenosine 5'-phosphosulfate + diphosphate. It participates in sulfur metabolism; hydrogen sulfide biosynthesis; sulfite from sulfate: step 1/3. Functionally, with CysN forms the ATP sulfurylase (ATPS) that catalyzes the adenylation of sulfate producing adenosine 5'-phosphosulfate (APS) and diphosphate, the first enzymatic step in sulfur assimilation pathway. APS synthesis involves the formation of a high-energy phosphoric-sulfuric acid anhydride bond driven by GTP hydrolysis by CysN coupled to ATP hydrolysis by CysD. The polypeptide is Sulfate adenylyltransferase subunit 2 (Pseudomonas syringae pv. tomato (strain ATCC BAA-871 / DC3000)).